The primary structure comprises 385 residues: Taurine hydroxylase-like protein SAT17 (385 aa).

It functions in the pathway mycotoxin biosynthesis. Taurine hydroxylase-like protein; part of the satratoxin SC3 cluster involved in the biosynthesis of satratoxins, trichothecene mycotoxins that are associated with human food poisonings. Satratoxins are suggested to be made by products of multiple gene clusters (SC1, SC2 and SC3) that encode 21 proteins in all, including polyketide synthases, acetyltransferases, and other enzymes expected to modify the trichothecene skeleton. SC1 encodes 10 proteins, SAT1 to SAT10. The largest are SAT8, which encodes a putative polyketide synthase (PKS) with a conventional non-reducing architecture, and SAT10, a putative protein containing four ankyrin repeats and thus may be involved in protein scaffolding. The putative short-chain reductase SAT3 may assist the PKS in some capacity. SAT6 contains a secretory lipase domain and acts probably as a trichothecene esterase. SAT5 encodes a putative acetyltransferase, and so, with SAT6, may affect endogenous protection from toxicity. The probable transcription factor SAT9 may regulate the expression of the SC1 cluster. SC2 encodes proteins SAT11 to SAT16, the largest of which encodes the putative reducing PKS SAT13. SAT11 is a cytochrome P450 monooxygenase, while SAT14 and SAT16 are probable acetyltransferases. The SC2 cluster may be regulated by the transcription factor SAT15. SC3 is a small cluster that encodes 5 proteins, SAT17 to SAT21. SAT21 is a putative MFS-type transporter which may have a role in exporting secondary metabolites. The four other proteins putatively encoded in SC3 include the taurine hydroxylase-like protein SAT17, the O-methyltransferase SAT18, the acetyltransferase SAT19, and the Cys6-type zinc finger SAT20, the latter being probably involved in regulation of SC3 expression. This Stachybotrys chartarum (strain CBS 109288 / IBT 7711) (Toxic black mold) protein is Taurine hydroxylase-like protein SAT17.